Here is a 142-residue protein sequence, read N- to C-terminus: MDFVEVKNLIMKSGMELKVNGVFNANPERFSINVGHSTEEIAVHVDVRFSYLSDKRQLIINHKTGDAWQEEQRDARFPFTAGQAFQVSVVFNFDTFDIYLPDGQVAHFTNHLGAQEYKYIFFVGDATVKNISVNVADKPTKR.

Residues 3 to 134 form the Galectin domain; the sequence is FVEVKNLIMK…DATVKNISVN (132 aa). 68-74 contacts a beta-D-galactoside; sequence WQEEQRD. An N-linked (GlcNAc...) asparagine glycan is attached at asparagine 130.

Homodimer. The N-terminus is blocked. Skin; highest expression in that of individuals showing resistance to infectious disease.

It localises to the secreted. In terms of biological role, involved in host defense at the body surface. Causes agglutination of the Gram-positive bacterium S.difficile. Possesses calcium-independent hemagglutinating activity. The protein is Galactose-binding lectin l-1 of Anguilla japonica (Japanese eel).